The primary structure comprises 141 residues: Small ribosomal subunit protein eS17z (141 aa).

This sequence belongs to the eukaryotic ribosomal protein eS17 family.

The chain is Small ribosomal subunit protein eS17z (RPS17A) from Arabidopsis thaliana (Mouse-ear cress).